Reading from the N-terminus, the 167-residue chain is Lipoprotein signal peptidase (167 aa).

3 helical membrane passes run 12–32 (WLWLAVLAFVLDQASKLAVVK), 68–88 (WQRWFFAVLAFAICGLLIHWL), and 99–119 (GIAYSLIIGGALGNVFDRLVL). Active-site residues include Asp124 and Asp142. The helical transmembrane segment at 137-157 (AFNLADSFIFIGAAMIVLDGF) threads the bilayer.

It belongs to the peptidase A8 family.

It is found in the cell inner membrane. The enzyme catalyses Release of signal peptides from bacterial membrane prolipoproteins. Hydrolyzes -Xaa-Yaa-Zaa-|-(S,diacylglyceryl)Cys-, in which Xaa is hydrophobic (preferably Leu), and Yaa (Ala or Ser) and Zaa (Gly or Ala) have small, neutral side chains.. It functions in the pathway protein modification; lipoprotein biosynthesis (signal peptide cleavage). In terms of biological role, this protein specifically catalyzes the removal of signal peptides from prolipoproteins. This Aeromonas hydrophila subsp. hydrophila (strain ATCC 7966 / DSM 30187 / BCRC 13018 / CCUG 14551 / JCM 1027 / KCTC 2358 / NCIMB 9240 / NCTC 8049) protein is Lipoprotein signal peptidase.